Reading from the N-terminus, the 112-residue chain is Flowering-promoting factor 1-like protein 2 (112 aa).

It belongs to the FPF1 family. As to expression, expressed in leaves and in some parts of the flowers, mainly in the sepals.

Modulates the competence to flowering of apical meristems. In Arabidopsis thaliana (Mouse-ear cress), this protein is Flowering-promoting factor 1-like protein 2 (FLP2).